Consider the following 393-residue polypeptide: Venom metalloproteinase BumaMPs1 (393 aa).

The N-terminal stretch at 1–15 (MFVHLLVLLFAAVEA) is a signal peptide. N158 is a glycosylation site (N-linked (GlcNAc...) asparagine). The Peptidase M12B domain maps to 167 to 377 (KCVKIEYVFV…RVEELITRRK (211 aa)). H323 contacts Zn(2+). E324 is an active-site residue. Residues H327 and H333 each coordinate Zn(2+). The disintegrin-like domain stretch occupies residues 378–393 (INHCIVETCDGKRKRN).

The protein belongs to the venom metalloproteinase (M12B) family. Zn(2+) serves as cofactor. In terms of processing, contains several disulfide bonds. In terms of tissue distribution, expressed by the venom gland.

It localises to the secreted. Metalloprotease. The polypeptide is Venom metalloproteinase BumaMPs1 (Olivierus martensii (Manchurian scorpion)).